A 1340-amino-acid chain; its full sequence is WASH complex subunit 2 (1340 aa).

Positions 1 to 219 (MNRTTPDQEL…VGSDRGSIVD (219 aa)) are sufficient for interaction with WASHC3, WASHC4 and WASHC5; required for interaction with WASHC1. Ser157, Ser159, Ser204, Ser205, and Ser209 each carry phosphoserine. The span at 201 to 213 (GELSSEEGSVGSD) shows a compositional bias: low complexity. Residues 201–404 (GELSSEEGSV…SSSKPGKKIP (204 aa)) are disordered. The segment covering 219 to 231 (DTEEEKEEEESDE) has biased composition (acidic residues). Over residues 232 to 241 (DFAHHSDNDQ) the composition is skewed to basic and acidic residues. 2 stretches are compositionally biased toward acidic residues: residues 249–258 (SDEEEDDDGC) and 265–275 (EKEEEDIEDIE). Ser287 is subject to Phosphoserine. Residues 292 to 306 (LAARIKGDAVGRVDE) show a composition bias toward basic and acidic residues. Thr330 carries the phosphothreonine modification. A compositionally biased stretch (gly residues) spans 354–365 (GSGGGLFSGGKG). The interval 355-599 (SGGGLFSGGK…QTLSLQAQGE (245 aa)) is sufficient for interaction with CCDC93. The segment at 356–1340 (GGGLFSGGKG…DDPLNAFGGQ (985 aa)) is interaction with VPS35. The LFa 1 motif lies at 366 to 377 (LFDDEDEESDLF). 2 positions are modified to phosphoserine: Ser394 and Ser396. 3 short sequence motifs (LFa) span residues 410-418 (VFLGDTDVF), 449-462 (LFDDDDGDDDDDFF), and 481-490 (IFGDDEGDLF). Disordered regions lie at residues 421–586 (ASVP…GGTA), 618–663 (SSDE…KASL), and 695–838 (DSGG…STGV). Acidic residues predominate over residues 450–461 (FDDDDGDDDDDF). Positions 506-516 (DENKARAEKKV) are enriched in basic and acidic residues. A compositionally biased stretch (low complexity) spans 517–527 (SLPSSKNLKPS). 3 short sequence motifs (LFa) span residues 536–547 (LFSDEEDSEDLF), 571–582 (LFEDEDEEDNLF), and 616–628 (LFSSDEEDQWNIP). 2 positions are modified to phosphoserine: Ser538 and Ser543. The span at 546-566 (LFSSQSASKLKGAPLLPGKLP) shows a compositional bias: low complexity. 2 positions are modified to phosphoserine: Ser618 and Ser619. Positions 636 to 646 (SDSRSKGESRD) are enriched in basic and acidic residues. 3 consecutive short sequence motifs (LFa) follow at residues 663-673 (LFEEDEEDDLF), 689-701 (LFEDDVDSGGSLF), and 725-737 (LFSDEEEKEAQLG). Ser727, Ser751, Ser786, and Ser801 each carry phosphoserine. Over residues 740–767 (PVDKKVESAKESLKFGRTDVAESEKEGL) the composition is skewed to basic and acidic residues. Positions 802–816 (LFDEEEDKMEDQNTI) match the LFa 11 motif. The segment covering 822–833 (EVGKGRDPDARP) has biased composition (basic and acidic residues). 2 consecutive short sequence motifs (LFa) follow at residues 838-846 (VFQDEELLF) and 855-861 (DPDVDLF). A phosphoserine mark is found at Ser873 and Ser876. The LFa 14 signature appears at 877 to 887 (LFGDDEDDDLF). Disordered regions lie at residues 906 to 950 (DYSV…KEPS) and 987 to 1205 (FPSS…EDED). Basic and acidic residues predominate over residues 916 to 930 (KHPETIQGIKEKGIW). The interval 936-1340 (QDSSGLAPFK…DDPLNAFGGQ (405 aa)) is interaction with phospholipids. Over residues 1027–1045 (NKSRVKMRGKRRPQTRAAR) the composition is skewed to basic residues. The tract at residues 1028-1046 (KSRVKMRGKRRPQTRAARR) is required for interaction with F-actin-capping protein subunit alpha (CAPZA1 or CAPZA2 or CAPZA3). Phosphoserine occurs at positions 1053 and 1086. Residues 1093–1109 (EALAAAAAPWEGGPVPG) show a composition bias toward low complexity. A Phosphoserine modification is found at Ser1113. 6 short sequence motifs (LFa) span residues 1128 to 1135 (LFDSGDIF), 1170 to 1184 (MFPALGEASSDDDLF), 1200 to 1208 (LLEDEDDLF), 1233 to 1239 (IFEDDIF), 1261 to 1269 (LFDDNIDIF), and 1289 to 1298 (IFDDDMDDIF). Ser1178 and Ser1179 each carry phosphoserine. The interval 1301 to 1325 (GIQAKTAKPKSRSAQAAPEPRFEHK) is disordered. Positions 1329-1337 (IFDDPLNAF) match the LFa 21 motif.

Belongs to the FAM21 family. In terms of assembly, component of the WASH core complex also described as WASH regulatory complex (SHRC) composed of WASHC1, WASHC2, WASHC3, WASHC4 and WASHC5; in the complex interacts (via N-terminus) directly with WASHC1. The WASH core complex associates with the F-actin-capping protein dimer (formed by CAPZA1, CAPZA2 or CAPZA3 and CAPZB) in a transient or substoichiometric manner which was initially described as WASH complex. Interacts with VPS35; mediates the association with the retromer CSC complex. Interacts with FKBP15. Interacts with CCDC93, CCDC22, VPS35L; indicative for an association of the WASH core complex with the CCC and retriever complexes. Directly interacts with TBC1D23.

It localises to the early endosome membrane. The protein resides in the cell membrane. Its function is as follows. Acts as a component of the WASH core complex that functions as a nucleation-promoting factor (NPF) at the surface of endosomes, where it recruits and activates the Arp2/3 complex to induce actin polymerization, playing a key role in the fission of tubules that serve as transport intermediates during endosome sorting. Mediates the recruitment of the WASH core complex to endosome membranes via binding to phospholipids and VPS35 of the retromer CSC. Mediates the recruitment of the F-actin-capping protein dimer to the WASH core complex probably promoting localized F-actin polymerization needed for vesicle scission. Via its C-terminus binds various phospholipids, most strongly phosphatidylinositol 4-phosphate (PtdIns-(4)P), phosphatidylinositol 5-phosphate (PtdIns-(5)P) and phosphatidylinositol 3,5-bisphosphate (PtdIns-(3,5)P2). Involved in the endosome-to-plasma membrane trafficking and recycling of SNX27-retromer-dependent cargo proteins, such as GLUT1. Required for the association of DNAJC13, ENTR1, ANKRD50 with retromer CSC subunit VPS35. Required for the endosomal recruitment of CCC and retriever complexes subunits COMMD1 and CCDC93 as well as the retrievere complex subunit VPS35L. This is WASH complex subunit 2 from Pongo abelii (Sumatran orangutan).